Reading from the N-terminus, the 448-residue chain is Tumor necrosis factor receptor superfamily member EDAR (448 aa).

The signal sequence occupies residues 1-26 (MAHVGDCTQTPWLPVLVVSLMCSARA). The Extracellular portion of the chain corresponds to 27-187 (EYSNCGENEY…LSGQGHLATA (161 aa)). TNFR-Cys repeat units lie at residues 30–71 (NCGE…DYGC), 73–113 (PCPA…DAEC), and 115–148 (PCLP…TKEC). Intrachain disulfides connect Cys31/Cys44, Cys47/Cys60, Cys50/Cys71, Cys74/Cys87, Cys93/Cys113, and Cys135/Cys148. N-linked (GlcNAc...) asparagine glycosylation occurs at Asn38. A helical transmembrane segment spans residues 188–208 (LIIAMSTIFIMAIAIVLIIMF). The Cytoplasmic portion of the chain corresponds to 209–448 (YILKTKPSAP…PPASQPHAAS (240 aa)). The tract at residues 220 to 297 (CCTSHPGKSV…EEPAPDKQGS (78 aa)) is disordered. Residues 233-243 (VSKDEEKKEAP) show a composition bias toward basic and acidic residues. Over residues 271–283 (DASSENEQLLSRS) the composition is skewed to polar residues. The Death domain occupies 358–431 (RMLSSTYNSE…DAVESLCADI (74 aa)).

In terms of assembly, binds to EDARADD. Associates with TRAF1, TRAF2, TRAF3 and NIK. In terms of tissue distribution, detected in fetal kidney, lung, skin and cultured neonatal epidermal keratinocytes. Not detected in lymphoblast and fibroblast cell lines.

The protein resides in the membrane. Receptor for EDA isoform A1, but not for EDA isoform A2. Mediates the activation of NF-kappa-B and JNK. May promote caspase-independent cell death. This is Tumor necrosis factor receptor superfamily member EDAR (EDAR) from Homo sapiens (Human).